A 134-amino-acid chain; its full sequence is MARVKRGVTAHAKHKKVLDQAAGFRGRRKNTIRTAKAAVDRSKQYAYRDRKNRKRSFRALWIQRINAAVREQGLTYGRFIDGLAKAGIEIDRKVLSDIAIHEPDAFGALVASAKKALEYLKNTETPNAFEGAVR.

Belongs to the bacterial ribosomal protein bL20 family.

In terms of biological role, binds directly to 23S ribosomal RNA and is necessary for the in vitro assembly process of the 50S ribosomal subunit. It is not involved in the protein synthesizing functions of that subunit. The protein is Large ribosomal subunit protein bL20 of Brucella anthropi (strain ATCC 49188 / DSM 6882 / CCUG 24695 / JCM 21032 / LMG 3331 / NBRC 15819 / NCTC 12168 / Alc 37) (Ochrobactrum anthropi).